Here is a 314-residue protein sequence, read N- to C-terminus: Methionyl-tRNA formyltransferase (314 aa).

112–115 (SLLP) contacts (6S)-5,6,7,8-tetrahydrofolate.

It belongs to the Fmt family.

The catalysed reaction is L-methionyl-tRNA(fMet) + (6R)-10-formyltetrahydrofolate = N-formyl-L-methionyl-tRNA(fMet) + (6S)-5,6,7,8-tetrahydrofolate + H(+). Attaches a formyl group to the free amino group of methionyl-tRNA(fMet). The formyl group appears to play a dual role in the initiator identity of N-formylmethionyl-tRNA by promoting its recognition by IF2 and preventing the misappropriation of this tRNA by the elongation apparatus. The sequence is that of Methionyl-tRNA formyltransferase from Aeromonas hydrophila subsp. hydrophila (strain ATCC 7966 / DSM 30187 / BCRC 13018 / CCUG 14551 / JCM 1027 / KCTC 2358 / NCIMB 9240 / NCTC 8049).